Reading from the N-terminus, the 469-residue chain is 3-isopropylmalate dehydratase large subunit (469 aa).

Residues Cys-347, Cys-408, and Cys-411 each coordinate [4Fe-4S] cluster.

It belongs to the aconitase/IPM isomerase family. LeuC type 1 subfamily. Heterodimer of LeuC and LeuD. The cofactor is [4Fe-4S] cluster.

The enzyme catalyses (2R,3S)-3-isopropylmalate = (2S)-2-isopropylmalate. It participates in amino-acid biosynthesis; L-leucine biosynthesis; L-leucine from 3-methyl-2-oxobutanoate: step 2/4. Catalyzes the isomerization between 2-isopropylmalate and 3-isopropylmalate, via the formation of 2-isopropylmaleate. This is 3-isopropylmalate dehydratase large subunit from Haemophilus influenzae (strain 86-028NP).